Here is a 282-residue protein sequence, read N- to C-terminus: Bifunctional protein FolD (282 aa).

Residues 166 to 168 (GRS) and S191 contribute to the NADP(+) site.

The protein belongs to the tetrahydrofolate dehydrogenase/cyclohydrolase family. Homodimer.

It carries out the reaction (6R)-5,10-methylene-5,6,7,8-tetrahydrofolate + NADP(+) = (6R)-5,10-methenyltetrahydrofolate + NADPH. It catalyses the reaction (6R)-5,10-methenyltetrahydrofolate + H2O = (6R)-10-formyltetrahydrofolate + H(+). The protein operates within one-carbon metabolism; tetrahydrofolate interconversion. Its function is as follows. Catalyzes the oxidation of 5,10-methylenetetrahydrofolate to 5,10-methenyltetrahydrofolate and then the hydrolysis of 5,10-methenyltetrahydrofolate to 10-formyltetrahydrofolate. In Acidovorax sp. (strain JS42), this protein is Bifunctional protein FolD.